Reading from the N-terminus, the 109-residue chain is Class I hydrophobin SC1 (109 aa).

Residues 1-22 form the signal peptide; it reads MRFSLAILALPVLAAATAVPRG. Cystine bridges form between cysteine 27/cysteine 88, cysteine 34/cysteine 82, cysteine 35/cysteine 69, and cysteine 89/cysteine 102.

The protein belongs to the fungal hydrophobin family. Self-assembles to form functional amyloid fibrils called rodlets. Self-assembly into fibrillar rodlets occurs spontaneously at hydrophobic:hydrophilic interfaces and the rodlets further associate laterally to form amphipathic monolayers.

It localises to the secreted. The protein resides in the cell wall. Its function is as follows. Aerial growth, conidiation, and dispersal of filamentous fungi in the environment rely upon a capability of their secreting small amphipathic proteins called hydrophobins (HPBs) with low sequence identity. Class I can self-assemble into an outermost layer of rodlet bundles on aerial cell surfaces, conferring cellular hydrophobicity that supports fungal growth, development and dispersal; whereas Class II form highly ordered films at water-air interfaces through intermolecular interactions but contribute nothing to the rodlet structure. SC1 is a dikaryon-specific class I hydrophobin that contributes to the formation of aerial hyphae and fruiting bodies. The chain is Class I hydrophobin SC1 from Schizophyllum commune (Split gill fungus).